Here is a 139-residue protein sequence, read N- to C-terminus: Nucleoside diphosphate kinase (139 aa).

6 residues coordinate ATP: Lys-10, Phe-58, Arg-86, Thr-92, Arg-103, and Asn-113. His-116 functions as the Pros-phosphohistidine intermediate in the catalytic mechanism.

It belongs to the NDK family. In terms of assembly, homotetramer. Requires Mg(2+) as cofactor.

The protein localises to the cytoplasm. It carries out the reaction a 2'-deoxyribonucleoside 5'-diphosphate + ATP = a 2'-deoxyribonucleoside 5'-triphosphate + ADP. The catalysed reaction is a ribonucleoside 5'-diphosphate + ATP = a ribonucleoside 5'-triphosphate + ADP. Functionally, major role in the synthesis of nucleoside triphosphates other than ATP. The ATP gamma phosphate is transferred to the NDP beta phosphate via a ping-pong mechanism, using a phosphorylated active-site intermediate. The polypeptide is Nucleoside diphosphate kinase (Caulobacter vibrioides (strain ATCC 19089 / CIP 103742 / CB 15) (Caulobacter crescentus)).